Here is a 530-residue protein sequence, read N- to C-terminus: Bifunctional purine biosynthesis protein PurH (530 aa).

The 148-residue stretch at 1-148 folds into the MGS-like domain; that stretch reads MNNARPIHRA…KNHKDVAIVV (148 aa).

It belongs to the PurH family.

The catalysed reaction is (6R)-10-formyltetrahydrofolate + 5-amino-1-(5-phospho-beta-D-ribosyl)imidazole-4-carboxamide = 5-formamido-1-(5-phospho-D-ribosyl)imidazole-4-carboxamide + (6S)-5,6,7,8-tetrahydrofolate. It carries out the reaction IMP + H2O = 5-formamido-1-(5-phospho-D-ribosyl)imidazole-4-carboxamide. Its pathway is purine metabolism; IMP biosynthesis via de novo pathway; 5-formamido-1-(5-phospho-D-ribosyl)imidazole-4-carboxamide from 5-amino-1-(5-phospho-D-ribosyl)imidazole-4-carboxamide (10-formyl THF route): step 1/1. It functions in the pathway purine metabolism; IMP biosynthesis via de novo pathway; IMP from 5-formamido-1-(5-phospho-D-ribosyl)imidazole-4-carboxamide: step 1/1. The sequence is that of Bifunctional purine biosynthesis protein PurH from Vibrio cholerae serotype O1 (strain ATCC 39541 / Classical Ogawa 395 / O395).